A 632-amino-acid polypeptide reads, in one-letter code: ATP-dependent zinc metalloprotease FtsH (632 aa).

Residues 1-9 (MKPTNEPKK) are Cytoplasmic-facing. Residues 10–30 (PFFQSPIVLAVLGGILLIFFL) form a helical membrane-spanning segment. At 31-116 (RSFNSDGSFS…INYSGFSESN (86 aa)) the chain is on the periplasmic side. A helical membrane pass occupies residues 117-137 (FFTDMLGWLMPILVILGLWMF). The Cytoplasmic segment spans residues 138 to 632 (MANRMQKNMG…RLIPLEEQAS (495 aa)). 210–217 (GPPGTGKT) is a binding site for ATP. His-434 is a binding site for Zn(2+). Glu-435 is a catalytic residue. Zn(2+)-binding residues include His-438 and Asp-511.

It in the central section; belongs to the AAA ATPase family. This sequence in the C-terminal section; belongs to the peptidase M41 family. As to quaternary structure, homohexamer. Zn(2+) serves as cofactor.

The protein localises to the cell inner membrane. In terms of biological role, acts as a processive, ATP-dependent zinc metallopeptidase for both cytoplasmic and membrane proteins. Plays a role in the quality control of integral membrane proteins. In Helicobacter pylori (strain J99 / ATCC 700824) (Campylobacter pylori J99), this protein is ATP-dependent zinc metalloprotease FtsH.